The following is a 777-amino-acid chain: DISP complex protein LRCH3 (777 aa).

LRR repeat units lie at residues 56-79, 81-104, 105-127, 128-150, 152-172, 173-195, 196-218, 220-239, 240-264, and 266-290; these read AAVT…AANH, LTDT…ACHF, VSLE…ILNL, QALT…LCNL, LKVL…IGHL, RHLM…IGNL, EALR…LAEL, LIRL…CYRN, LRHL…CIKG, and VHIF…DRRP. The interval 56 to 290 is mediates interaction with DOCK7; sequence AAVTGVLSLS…PDLPDYDRRP (235 aa). Residues Ser324, Ser415, and Ser419 each carry the phosphoserine modification. The tract at residues 382–648 is mediates direct interaction with MYO6; sequence TAEEEEAEVR…DSTDSITGQN (267 aa). The disordered stretch occupies residues 568-590; sequence FTPLKSDDRPNALLSSPATETVH. A phosphoserine mark is found at Ser611 and Ser628. The disordered stretch occupies residues 621 to 653; the sequence is ETNKGHASPLPPSAAPTTDSTDSITGQNSRQRE. Low complexity predominate over residues 635–645; that stretch reads APTTDSTDSIT. Residues 652 to 765 enclose the Calponin-homology (CH) domain; sequence REEELELIDQ…VTVQALLELA (114 aa).

In terms of assembly, component of the DOCK7-induced septin displacement/DISP complex, at least composed of DOCK7, LRCH3 and MYO6.

It localises to the cytoplasm. Functionally, as part of the DISP complex, may regulate the association of septins with actin and thereby regulate the actin cytoskeleton. The protein is DISP complex protein LRCH3 of Homo sapiens (Human).